We begin with the raw amino-acid sequence, 345 residues long: NADH-ubiquinone oxidoreductase chain 2 (345 aa).

Helical transmembrane passes span 1–21 (MNPI…ILAM), 25–45 (HWVY…PIIS), 60–80 (FLIQ…NAYL), 113–133 (FWLP…IATW), 148–168 (LIPT…GGLG), 191–211 (VIII…YMIF), 239–259 (IITS…PMSG), 274–294 (HLTP…MFYL), and 324–344 (SSLS…PLLI).

The protein belongs to the complex I subunit 2 family.

The protein localises to the mitochondrion inner membrane. It catalyses the reaction a ubiquinone + NADH + 5 H(+)(in) = a ubiquinol + NAD(+) + 4 H(+)(out). Its function is as follows. Core subunit of the mitochondrial membrane respiratory chain NADH dehydrogenase (Complex I) that is believed to belong to the minimal assembly required for catalysis. Complex I functions in the transfer of electrons from NADH to the respiratory chain. The immediate electron acceptor for the enzyme is believed to be ubiquinone. This is NADH-ubiquinone oxidoreductase chain 2 (MT-ND2) from Varanus baritji (Black-spotted ridge-tailed monitor).